We begin with the raw amino-acid sequence, 272 residues long: MKRTAFYLSDGTGITAETLGHSMLSQFGSIEFIQVTLPFVQSDEQTREAVARINKAAKEDGAKPVVFSTLVNTDHRAILHGCDALILDLFGAFLRPLEDELGVRSSHKINQSHAIRDAESYRIRINAVHFALDNDDGARTRHYDQADIILIGVSRSGKTPTCLYLALQFGLFTANYPLTEDDFDDLRLPKALMEHKHKLFGLTIDADRLSAIRSERKAGSKYASPRQCDMELRALEAMYNKHNIPYLDATELSIEEISTRVLAMKGLKRRLQ.

Position 152–159 (152–159) interacts with ADP; the sequence is GVSRSGKT.

The protein belongs to the pyruvate, phosphate/water dikinase regulatory protein family. PSRP subfamily.

It carries out the reaction [pyruvate, water dikinase] + ADP = [pyruvate, water dikinase]-phosphate + AMP + H(+). The catalysed reaction is [pyruvate, water dikinase]-phosphate + phosphate + H(+) = [pyruvate, water dikinase] + diphosphate. Bifunctional serine/threonine kinase and phosphorylase involved in the regulation of the phosphoenolpyruvate synthase (PEPS) by catalyzing its phosphorylation/dephosphorylation. In Alcanivorax borkumensis (strain ATCC 700651 / DSM 11573 / NCIMB 13689 / SK2), this protein is Putative phosphoenolpyruvate synthase regulatory protein.